Reading from the N-terminus, the 257-residue chain is tRNA (guanine-N(7)-)-methyltransferase (257 aa).

Over residues 1–12 (MARDSEDQDMET) the composition is skewed to acidic residues. The tract at residues 1–25 (MARDSEDQDMETETNGAAEGLDPTS) is disordered. Residues Gly80, 103–104 (EI), 138–139 (NA), and Leu158 contribute to the S-adenosyl-L-methionine site. Asp161 is an active-site residue. 236 to 238 (SEE) contacts S-adenosyl-L-methionine.

It belongs to the class I-like SAM-binding methyltransferase superfamily. TrmB family.

It localises to the nucleus. It catalyses the reaction guanosine(46) in tRNA + S-adenosyl-L-methionine = N(7)-methylguanosine(46) in tRNA + S-adenosyl-L-homocysteine. Its pathway is tRNA modification; N(7)-methylguanine-tRNA biosynthesis. In terms of biological role, catalyzes the formation of N(7)-methylguanine at position 46 (m7G46) in tRNA. The chain is tRNA (guanine-N(7)-)-methyltransferase from Drosophila ananassae (Fruit fly).